Reading from the N-terminus, the 447-residue chain is GA-binding protein subunit beta-2 (447 aa).

ANK repeat units follow at residues aspartate 5–threonine 34, leucine 37–alanine 66, valine 70–alanine 99, leucine 103–alanine 132, and phenylalanine 136–alanine 166. Serine 253 is subject to Phosphoserine. A coiled-coil region spans residues glutamate 345–glutamine 395. Residues arginine 418–threonine 447 form a disordered region.

In terms of assembly, heterotetramer of two alpha and two beta subunits. The C-terminal is necessary for the formation of a heterotetrameric GABP-alpha-2/beta-2 complex, and also facilitates homotypic dimerization. Interacts with ADGRB2.

It is found in the nucleus. Its function is as follows. May function as transcription factor capable of interacting with purine rich repeats (GA repeats). The polypeptide is GA-binding protein subunit beta-2 (GABPB2) (Bos taurus (Bovine)).